Consider the following 664-residue polypeptide: NAD(P)H-quinone oxidoreductase chain 5 (664 aa).

The next 16 membrane-spanning stretches (helical) occupy residues 7–27, 39–59, 91–111, 120–140, 144–164, 187–207, 219–239, 258–278, 290–310, 327–347, 352–372, 395–415, 420–440, 495–515, 541–561, and 643–663; these read YAWL…IGLI, LNAV…FGLL, HLSA…MIYT, GYVR…GLVF, LVQV…LIGF, FGLL…EFDL, GQIS…GPVA, TPIS…FLVA, AMNV…TIAL, LGYM…FHLM, FKAM…EVVG, ATTF…AGFW, ILGL…ATAG, FPLM…VPWG, FLIM…IASL, and VQFY…FFSV.

It belongs to the complex I subunit 5 family.

It localises to the cell membrane. It carries out the reaction a plastoquinone + NADH + (n+1) H(+)(in) = a plastoquinol + NAD(+) + n H(+)(out). The catalysed reaction is a plastoquinone + NADPH + (n+1) H(+)(in) = a plastoquinol + NADP(+) + n H(+)(out). Functionally, NDH-1 shuttles electrons from NAD(P)H, via FMN and iron-sulfur (Fe-S) centers, to quinones in the respiratory chain. The immediate electron acceptor for the enzyme in this species is believed to be plastoquinone. Couples the redox reaction to proton translocation (for every two electrons transferred, four hydrogen ions are translocated across the cytoplasmic membrane), and thus conserves the redox energy in a proton gradient. This chain is NAD(P)H-quinone oxidoreductase chain 5 (ndhF), found in Picosynechococcus sp. (strain ATCC 27264 / PCC 7002 / PR-6) (Agmenellum quadruplicatum).